Consider the following 231-residue polypeptide: MKRAVVVFSGGQDSTTCLAQARHQYDEVHCVTFDYGQRHRAEIDVARALALKLGTRAHKVLDVTLLNELAVSSLTRDSIPVPDYEPNADGIPNTFVPGRNILFLTLAAIYAYQVKAEAVITGVCETDFSGYPDCRDEFVKALNHAVNLGMAKDIRFETPLMWIDKAETWALADYWGQLDLVREETLTCYNGIKGDGCGHCAACNLRANGLNHYLSNKAAVMAAMKQKTGLR.

8 to 18 (FSGGQDSTTCL) serves as a coordination point for ATP. Positions 188, 197, 200, and 203 each coordinate Zn(2+).

This sequence belongs to the QueC family. Requires Zn(2+) as cofactor.

It catalyses the reaction 7-carboxy-7-deazaguanine + NH4(+) + ATP = 7-cyano-7-deazaguanine + ADP + phosphate + H2O + H(+). It functions in the pathway purine metabolism; 7-cyano-7-deazaguanine biosynthesis. Catalyzes the ATP-dependent conversion of 7-carboxy-7-deazaguanine (CDG) to 7-cyano-7-deazaguanine (preQ(0)). This chain is 7-cyano-7-deazaguanine synthase, found in Salmonella gallinarum (strain 287/91 / NCTC 13346).